A 358-amino-acid polypeptide reads, in one-letter code: Peptide chain release factor 1 (358 aa).

Position 234 is an N5-methylglutamine (glutamine 234).

Belongs to the prokaryotic/mitochondrial release factor family. Methylated by PrmC. Methylation increases the termination efficiency of RF1.

Its subcellular location is the cytoplasm. Its function is as follows. Peptide chain release factor 1 directs the termination of translation in response to the peptide chain termination codons UAG and UAA. The sequence is that of Peptide chain release factor 1 from Leifsonia xyli subsp. xyli (strain CTCB07).